The primary structure comprises 436 residues: Histone acetyltransferase type B subunit 2 (436 aa).

5 WD repeats span residues 136–176 (DHKG…SLPT), 187–227 (GHTK…KGNK), 237–277 (HHSS…TTRA), 284–324 (QHRD…TKLH), and 328–368 (SHTD…EEQT). The interval 370–374 (EDAQD) is interaction with the histone H4 N-terminus. One copy of the WD 6 repeat lies at 385 to 425 (GHTNRISDFSWNLNDPWVLCSAAEDNLLQVWKVADAIVGKD).

This sequence belongs to the WD repeat RBAP46/RBAP48/MSI1 family. Component of the HAT-B complex composed of at least hat1 and hat2. The HAT-B complex binds to histone H4 tail.

Its subcellular location is the cytoplasm. It is found in the nucleus. Regulatory subunit of the histone acetylase B (HAT-B) complex. The complex acetylates 'Lys-12' of histone H4 which is required for telomeric silencing. The chain is Histone acetyltransferase type B subunit 2 (hat2) from Aspergillus fumigatus (strain ATCC MYA-4609 / CBS 101355 / FGSC A1100 / Af293) (Neosartorya fumigata).